A 1898-amino-acid polypeptide reads, in one-letter code: Receptor-type tyrosine-protein phosphatase F (1898 aa).

Residues Met1 to Gly29 form the signal peptide. Topologically, residues Asp30–Trp1254 are extracellular. Ig-like C2-type domains follow at residues Pro33 to Ser123, Pro135 to Tyr224, and Pro232 to Thr314. The cysteines at positions 54 and 107 are disulfide-linked. Lys68–Arg77 contributes to the heparin binding site. Residue Asn117 is glycosylated (N-linked (GlcNAc...) asparagine). A disulfide bridge links Cys156 with Cys207. 2 N-linked (GlcNAc...) asparagine glycosylation sites follow: Asn250 and Asn295. Cys253 and Cys298 are oxidised to a cystine. 8 consecutive Fibronectin type-III domains span residues Pro321 to Gln411, Pro416 to Gly510, Gln514 to Ser604, Pro609 to Asp706, Pro711 to Ala810, Val811 to Val905, Phe909 to Val1001, and Phe1005 to Asp1089. Positions Pro399–Arg418 are disordered. Residues Gly693–Arg713 are disordered. Asn721 carries an N-linked (GlcNAc...) asparagine glycan. Residues Asn941 and Asn957 are each glycosylated (N-linked (GlcNAc...) asparagine). A helical membrane pass occupies residues Val1255–Phe1275. At Lys1276 to Thr1898 the chain is on the cytoplasmic side. Ser1296 carries the phosphoserine modification. Tyrosine-protein phosphatase domains lie at Phe1343 to Ala1598 and Met1630 to Tyr1889. Residues Asp1507, Cys1539–Arg1545, and Gln1583 contribute to the substrate site. The Phosphocysteine intermediate role is filled by Cys1539. Catalysis depends on Cys1830, which acts as the Phosphocysteine intermediate.

It belongs to the protein-tyrosine phosphatase family. Receptor class 2A subfamily. In terms of assembly, interacts with GRIP1. Interacts with PPFIA1, PPFIA2 and PPFIA3. Interacts with INSR.

The protein resides in the membrane. It carries out the reaction O-phospho-L-tyrosyl-[protein] + H2O = L-tyrosyl-[protein] + phosphate. Functionally, possible cell adhesion receptor. It possesses an intrinsic protein tyrosine phosphatase activity (PTPase) and dephosphorylates EPHA2 regulating its activity. Its function is as follows. The first PTPase domain has enzymatic activity, while the second one seems to affect the substrate specificity of the first one. This is Receptor-type tyrosine-protein phosphatase F (PTPRF) from Bos taurus (Bovine).